Reading from the N-terminus, the 274-residue chain is Phosphatidylglycerol--prolipoprotein diacylglyceryl transferase (274 aa).

The next 4 helical transmembrane spans lie at 19 to 39 (VGSVVIRWYGVLIAAAIVLGL), 59 to 79 (LAIWLVIGAIPCARLYYVLFQ), 93 to 113 (IWRGGIAIHGAILGGMLAALI), and 120 to 140 (VSFWQLADLVAPSLILGQAIG). Residue Arg-141 participates in a 1,2-diacyl-sn-glycero-3-phospho-(1'-sn-glycerol) binding. A run of 3 helical transmembrane segments spans residues 181 to 201 (TFLYESVWNLMVLGILLALFF), 209 to 229 (GTIFLVYAVTYSLGRLWIEGL), and 243 to 263 (QVVSLIGIGIGMLGLTWLYLL).

It belongs to the Lgt family.

It is found in the cell inner membrane. The catalysed reaction is L-cysteinyl-[prolipoprotein] + a 1,2-diacyl-sn-glycero-3-phospho-(1'-sn-glycerol) = an S-1,2-diacyl-sn-glyceryl-L-cysteinyl-[prolipoprotein] + sn-glycerol 1-phosphate + H(+). Its pathway is protein modification; lipoprotein biosynthesis (diacylglyceryl transfer). In terms of biological role, catalyzes the transfer of the diacylglyceryl group from phosphatidylglycerol to the sulfhydryl group of the N-terminal cysteine of a prolipoprotein, the first step in the formation of mature lipoproteins. In Acaryochloris marina (strain MBIC 11017), this protein is Phosphatidylglycerol--prolipoprotein diacylglyceryl transferase.